We begin with the raw amino-acid sequence, 258 residues long: Snake venom serine protease PA (258 aa).

Positions 1-18 are cleaved as a signal peptide; that stretch reads MVLIRVLANLLILQLSYA. A propeptide spanning residues 19–24 is cleaved from the precursor; that stretch reads QKSPEL. The 225-residue stretch at 25 to 249 folds into the Peptidase S1 domain; sequence VVGGDECNIN…YNDWIKSIIA (225 aa). 6 disulfides stabilise this stretch: Cys-31/Cys-163, Cys-50/Cys-66, Cys-98/Cys-256, Cys-142/Cys-210, Cys-174/Cys-189, and Cys-200/Cys-225. N-linked (GlcNAc...) asparagine glycosylation is present at Asn-44. Active-site charge relay system residues include His-65 and Asp-110. Ser-204 acts as the Charge relay system in catalysis.

The protein belongs to the peptidase S1 family. Snake venom subfamily. As to quaternary structure, monomer. As to expression, expressed by the venom gland.

It is found in the secreted. Its function is as follows. Snake venom serine protease that may act in the hemostasis system of the prey. The polypeptide is Snake venom serine protease PA (Trimeresurus stejnegeri (Chinese green tree viper)).